A 639-amino-acid chain; its full sequence is 1-deoxy-D-xylulose-5-phosphate synthase (639 aa).

Residues H76 and 117-119 each bind thiamine diphosphate; that span reads AHS. Residue D148 participates in Mg(2+) binding. Residues 149 to 150, N181, Y288, and E370 each bind thiamine diphosphate; that span reads GS. Residue N181 coordinates Mg(2+).

The protein belongs to the transketolase family. DXPS subfamily. As to quaternary structure, homodimer. It depends on Mg(2+) as a cofactor. The cofactor is thiamine diphosphate.

The enzyme catalyses D-glyceraldehyde 3-phosphate + pyruvate + H(+) = 1-deoxy-D-xylulose 5-phosphate + CO2. The protein operates within metabolic intermediate biosynthesis; 1-deoxy-D-xylulose 5-phosphate biosynthesis; 1-deoxy-D-xylulose 5-phosphate from D-glyceraldehyde 3-phosphate and pyruvate: step 1/1. Functionally, catalyzes the acyloin condensation reaction between C atoms 2 and 3 of pyruvate and glyceraldehyde 3-phosphate to yield 1-deoxy-D-xylulose-5-phosphate (DXP). This is 1-deoxy-D-xylulose-5-phosphate synthase from Leptothrix cholodnii (strain ATCC 51168 / LMG 8142 / SP-6) (Leptothrix discophora (strain SP-6)).